Consider the following 287-residue polypeptide: N-acetylmannosamine kinase (287 aa).

ATP is bound by residues 5-12 (AIDIGGTK) and 131-138 (GVGGGIII). Residues His-155, Cys-165, Cys-167, and Cys-172 each coordinate Zn(2+).

The protein belongs to the ROK (NagC/XylR) family. NanK subfamily. As to quaternary structure, homodimer.

It carries out the reaction an N-acyl-D-mannosamine + ATP = an N-acyl-D-mannosamine 6-phosphate + ADP + H(+). It participates in amino-sugar metabolism; N-acetylneuraminate degradation; D-fructose 6-phosphate from N-acetylneuraminate: step 2/5. Functionally, catalyzes the phosphorylation of N-acetylmannosamine (ManNAc) to ManNAc-6-P. The chain is N-acetylmannosamine kinase from Vibrio cholerae serotype O1 (strain ATCC 39541 / Classical Ogawa 395 / O395).